A 271-amino-acid chain; its full sequence is uncharacterized protein (271 aa).

The protein belongs to the HAD-like hydrolase superfamily.

This is an uncharacterized protein from Staphylococcus aureus (strain NCTC 8325 / PS 47).